Here is a 1653-residue protein sequence, read N- to C-terminus: Cortactin-binding protein 2 (1653 aa).

Disordered regions lie at residues 1 to 27 (MATDGASCEPDASRAPEEAAGATAEAA), 203 to 222 (KKKTNELEEELSAEKRRSTE), 268 to 297 (QLKRGSDSKPSLSLPRKTKDRRSVSISVGT), 314 to 339 (ESTEHVKKSPLTVPVKPSPGSAKGSV), and 356 to 609 (HGDL…PSID). Positions 119–276 (RKMQERMSTQ…EQLKRGSDSK (158 aa)) form a coiled coil. A compositionally biased stretch (polar residues) spans 379-389 (GPSTGSPPDLT). The span at 390-408 (SSAAQSPAAAPHGLPPAHG) shows a compositional bias: low complexity. Composition is skewed to polar residues over residues 444–470 (GNANDPDQNGNTTQSPPSRDVSPTSRD), 478–490 (ARNTVTQALSRFT), and 573–584 (TVASSPPSSLPQ). The residue at position 488 (Arg488) is an Asymmetric dimethylarginine. ANK repeat units follow at residues 700-730 (GRPTLLQQAAAQGNVTLLSMLLNEEGLDINY), 734-763 (DGHSALYSAAKNGHTDCVRLLLNAEAQVNA), 767-796 (NGFTPLCAAAAQGHFECVELLIAYDAHINH), 800-829 (GGQTPLYLACKNGNKECIKLLLEAGTDRSV), and 833-862 (DGWTPVHAAVDTGNVDSLKLLMYHGAPAHG). The segment at 860–892 (AHGNSLNEEEPESDASDLDEGEESSEGKSKPVV) is disordered. Residues 866–883 (NEEEPESDASDLDEGEES) show a composition bias toward acidic residues. The stretch at 903-933 (EGWTAAHIAASKGFKNCLEILCRHRGLEPER) is one ANK 6 repeat. Residues 1441 to 1472 (ESGAWRKVNTSPRRKSGRFSSPTWNKPDLSNE) are disordered. At Ser1514 the chain carries Phosphoserine. The segment at 1545–1653 (DLRTFDSSGN…KNEHIEKLNK (109 aa)) is disordered. 2 stretches are compositionally biased toward polar residues: residues 1549 to 1564 (FDSSGNNPAFSATANN) and 1572 to 1589 (KEVSPLSSHQTTECSNNK). Residues 1614–1628 (SQNTKRSSSSSNTRQ) are compositionally biased toward low complexity. Residues 1635-1653 (SKEENWNLHKNEHIEKLNK) are compositionally biased toward basic and acidic residues.

In terms of assembly, interacts with CTTN/cortactin SH3 domain. Interacts with STRN, STRN4/zinedin and MOB4/phocein; this interactions mediate the association with the STRIPAK core complex and may regulate dendritic spine distribution of the STRIPAK complex in hippocampal neurons. Activation of glutamate receptors weakens the interaction with STRN and STRN4.

The protein localises to the cytoplasm. It localises to the cell cortex. The protein resides in the cell projection. Its subcellular location is the dendritic spine. Regulates the dendritic spine distribution of CTTN/cortactin in hippocampal neurons, and thus controls dendritic spinogenesis and dendritic spine maintenance. Associates with the striatin-interacting phosphatase and kinase (STRIPAK) core complex to regulate dendritic spine distribution of the STRIPAK complex in hippocampal neurons. The sequence is that of Cortactin-binding protein 2 (CTTNBP2) from Eulemur macaco macaco (Black lemur).